The sequence spans 52 residues: UPF0181 protein HI_1434.2 (52 aa).

It belongs to the UPF0181 family.

In Haemophilus influenzae (strain ATCC 51907 / DSM 11121 / KW20 / Rd), this protein is UPF0181 protein HI_1434.2.